The following is a 200-amino-acid chain: Pyrrolidone-carboxylate peptidase (200 aa).

Active-site residues include Glu78, Cys141, and His165.

Belongs to the peptidase C15 family. In terms of assembly, homotetramer.

Its subcellular location is the cytoplasm. It catalyses the reaction Release of an N-terminal pyroglutamyl group from a polypeptide, the second amino acid generally not being Pro.. Functionally, removes 5-oxoproline from various penultimate amino acid residues except L-proline. The polypeptide is Pyrrolidone-carboxylate peptidase (Lactobacillus helveticus (strain DPC 4571)).